A 527-amino-acid polypeptide reads, in one-letter code: Type II methyltransferase M.XamI (527 aa).

Belongs to the N(4)/N(6)-methyltransferase family.

The catalysed reaction is a 2'-deoxyadenosine in DNA + S-adenosyl-L-methionine = an N(6)-methyl-2'-deoxyadenosine in DNA + S-adenosyl-L-homocysteine + H(+). A gamma subtype methylase that recognizes the double-stranded sequence 5'-GTCGAC-3', possibly methylates A-5 on both strands, and protects the DNA from cleavage by the XamI endonuclease. The polypeptide is Type II methyltransferase M.XamI (Xanthomonas campestris pv. amaranthicola).